The primary structure comprises 328 residues: DNA polymerase III subunit delta' (328 aa).

In terms of assembly, DNA polymerase III contains a core (composed of alpha, epsilon and theta chains) that associates with a tau subunit. This core dimerizes to form the POLIII' complex. PolIII' associates with the gamma complex (composed of gamma, delta, delta', psi and chi chains) and with the beta chain to form the complete DNA polymerase III complex.

It carries out the reaction DNA(n) + a 2'-deoxyribonucleoside 5'-triphosphate = DNA(n+1) + diphosphate. Functionally, DNA polymerase III is a complex, multichain enzyme responsible for most of the replicative synthesis in bacteria. This DNA polymerase also exhibits 3' to 5' exonuclease activity. In Pseudomonas aeruginosa (strain ATCC 15692 / DSM 22644 / CIP 104116 / JCM 14847 / LMG 12228 / 1C / PRS 101 / PAO1), this protein is DNA polymerase III subunit delta' (holB).